Here is a 385-residue protein sequence, read N- to C-terminus: Cytochrome b (385 aa).

4 helical membrane passes run 32–52 (MGSL…FMAM), 76–98 (YILR…MHMA), 113–133 (LWNV…LGYC), and 179–199 (FFAL…MHLM). 2 residues coordinate heme b: His82 and His96. 2 residues coordinate heme b: His183 and His197. His202 is an a ubiquinone binding site. 4 helical membrane-spanning segments follow: residues 225–245 (FIFK…LFVF), 289–309 (LLGV…PFTD), 321–341 (LSKF…QIGA), and 348–368 (YVLM…IIVP).

The protein belongs to the cytochrome b family. In terms of assembly, fungal cytochrome b-c1 complex contains 10 subunits; 3 respiratory subunits, 2 core proteins and 5 low-molecular weight proteins. Cytochrome b-c1 complex is a homodimer. The cofactor is heme b.

The protein resides in the mitochondrion inner membrane. In terms of biological role, component of the ubiquinol-cytochrome c reductase complex (complex III or cytochrome b-c1 complex) that is part of the mitochondrial respiratory chain. The b-c1 complex mediates electron transfer from ubiquinol to cytochrome c. Contributes to the generation of a proton gradient across the mitochondrial membrane that is then used for ATP synthesis. The sequence is that of Cytochrome b (COB) from Saccharomyces paradoxus (Yeast).